The primary structure comprises 201 residues: Troponin I (201 aa).

Alanine 1 carries the post-translational modification N-acetylalanine. Residues 1-33 (ADKAKAAEEAKKKQDDIDRKKAEVRKRLEEQSL) are compositionally biased toward basic and acidic residues. Residues 1–45 (ADKAKAAEEAKKKQDDIDRKKAEVRKRLEEQSLKKQKKGFMTPER) form a disordered region. The interval 108-117 (IESDKYDVEL) is troponin T-interaction. The actin-binding stretch occupies residues 135–148 (DLRGKFIKPTLKKV). Residues lysine 142 and lysine 146 each carry the N6,N6,N6-trimethyllysine modification. The tract at residues 182–201 (EDDKGATEGDGPAAEEVAAE) is disordered.

This sequence belongs to the troponin I family.

Troponin I is the actomyosin ATPase inhibitory subunit present in the thin filament regulatory complex. The sequence is that of Troponin I from Astacus leptodactylus (Turkish narrow-clawed crayfish).